The sequence spans 125 residues: MINSPRVCIQVQSVYIEAQSSPDDERYVFAYTVTIRNLGRAPVQLLGRYWLITNGHGRETEVQGEGVVGVQPHIAPGEEYQYTSGAVIETPLGTMQGHYEMIDEKGVAFTIDIPVFRLAVPTLIH.

The 125-residue stretch at Met-1 to His-125 folds into the ApaG domain.

The sequence is that of Protein ApaG from Citrobacter koseri (strain ATCC BAA-895 / CDC 4225-83 / SGSC4696).